The chain runs to 87 residues: Protein anon-73B1 (87 aa).

Residues 25 to 47 (LLIRYGLYVGALFQFVCISAAVL) traverse the membrane as a helical segment. The segment at 52–87 (PDVNSNPETGEVTEREGEPVRTRLHKIRKLEKKKRR) is disordered. Residues 63–72 (VTEREGEPVR) show a composition bias toward basic and acidic residues. Basic residues predominate over residues 73-87 (TRLHKIRKLEKKKRR).

Belongs to the UPF0239 family.

Its subcellular location is the membrane. In Drosophila erecta (Fruit fly), this protein is Protein anon-73B1.